We begin with the raw amino-acid sequence, 379 residues long: UDP-4-amino-4-deoxy-L-arabinose--oxoglutarate aminotransferase (379 aa).

Lys-182 bears the N6-(pyridoxal phosphate)lysine mark.

This sequence belongs to the DegT/DnrJ/EryC1 family. ArnB subfamily. As to quaternary structure, homodimer. Requires pyridoxal 5'-phosphate as cofactor.

It catalyses the reaction UDP-4-amino-4-deoxy-beta-L-arabinose + 2-oxoglutarate = UDP-beta-L-threo-pentopyranos-4-ulose + L-glutamate. It functions in the pathway nucleotide-sugar biosynthesis; UDP-4-deoxy-4-formamido-beta-L-arabinose biosynthesis; UDP-4-deoxy-4-formamido-beta-L-arabinose from UDP-alpha-D-glucuronate: step 2/3. Its pathway is bacterial outer membrane biogenesis; lipopolysaccharide biosynthesis. Functionally, catalyzes the conversion of UDP-4-keto-arabinose (UDP-Ara4O) to UDP-4-amino-4-deoxy-L-arabinose (UDP-L-Ara4N). The modified arabinose is attached to lipid A and is required for resistance to polymyxin and cationic antimicrobial peptides. The sequence is that of UDP-4-amino-4-deoxy-L-arabinose--oxoglutarate aminotransferase from Escherichia coli O81 (strain ED1a).